The primary structure comprises 267 residues: Protein isy-1 (267 aa).

A coiled-coil region spans residues 175–204 (LEKLIEEKNIERINKEFAEKQAQKQQTASD). Residues 195–221 (QAQKQQTASDAAPENIYKVEEDDDDDL) are disordered.

It belongs to the ISY1 family. Ubiquitously expressed.

Its subcellular location is the nucleus. In terms of biological role, regulates the processing of the mir-60 microRNA (miRNA), which in turn negatively regulates the expression of the transcription factor zip-10. Does not affect the splicing of zip-10. This chain is Protein isy-1, found in Caenorhabditis elegans.